A 291-amino-acid polypeptide reads, in one-letter code: ATP synthase subunit a (291 aa).

The next 5 helical transmembrane spans lie at isoleucine 48–tryptophan 68, isoleucine 108–isoleucine 128, aspartate 161–isoleucine 181, leucine 241–tryptophan 261, and alanine 262–valine 282.

This sequence belongs to the ATPase A chain family. As to quaternary structure, F-type ATPases have 2 components, CF(1) - the catalytic core - and CF(0) - the membrane proton channel. CF(1) has five subunits: alpha(3), beta(3), gamma(1), delta(1), epsilon(1). CF(0) has three main subunits: a(1), b(2) and c(9-12). The alpha and beta chains form an alternating ring which encloses part of the gamma chain. CF(1) is attached to CF(0) by a central stalk formed by the gamma and epsilon chains, while a peripheral stalk is formed by the delta and b chains.

The protein resides in the cell inner membrane. In terms of biological role, key component of the proton channel; it plays a direct role in the translocation of protons across the membrane. In Acinetobacter baylyi (strain ATCC 33305 / BD413 / ADP1), this protein is ATP synthase subunit a.